A 518-amino-acid polypeptide reads, in one-letter code: Maturase K (518 aa).

It belongs to the intron maturase 2 family. MatK subfamily.

The protein localises to the plastid. It localises to the chloroplast. In terms of biological role, usually encoded in the trnK tRNA gene intron. Probably assists in splicing its own and other chloroplast group II introns. This Syzygium cumini (Java plum) protein is Maturase K.